The sequence spans 673 residues: Kinesin-like protein KIFC1 (673 aa).

A phosphoserine mark is found at S6, S26, S31, and S33. Disordered regions lie at residues 23-94 (KAPS…TGPR) and 109-136 (VPAV…KRPA). Polar residues predominate over residues 60 to 86 (TKITTSHPRVPSLTTVPQTQGQTTAQK). A coiled-coil region spans residues 142 to 306 (QLCDLNAELK…RRRLHNQLQE (165 aa)). The Kinesin motor domain maps to 310 to 663 (NIRVFCRVRP…LRFASKVNQC (354 aa)). The segment at 325 to 372 (PTPPPGLLLFPSGPGGPSDPPTRLSLSRSDERRGTLSGAPAPPTRHDF) is disordered. Residue T359 is modified to Phosphothreonine. 410 to 417 (GQTGSGKT) contacts ATP.

The protein belongs to the TRAFAC class myosin-kinesin ATPase superfamily. Kinesin family. NCD subfamily. In terms of assembly, binds NUBP1 and NUBP2. Interacts with PPP1R42.

It is found in the nucleus. Its subcellular location is the cytoplasm. It localises to the cytoskeleton. The protein localises to the microtubule organizing center. The protein resides in the centrosome. It is found in the spindle. Its subcellular location is the early endosome. Minus end-directed microtubule-dependent motor required for bipolar spindle formation. May contribute to movement of early endocytic vesicles. Regulates cilium formation and structure. The protein is Kinesin-like protein KIFC1 (KIFC1) of Homo sapiens (Human).